A 57-amino-acid polypeptide reads, in one-letter code: Large ribosomal subunit protein uL30 (57 aa).

This sequence belongs to the universal ribosomal protein uL30 family. In terms of assembly, part of the 50S ribosomal subunit.

The sequence is that of Large ribosomal subunit protein uL30 from Buchnera aphidicola subsp. Cinara cedri (strain Cc).